The sequence spans 146 residues: Acidic phospholipase A2 S13-69J (146 aa).

Residues 1 to 19 (MYPAHLLVLLAVCVSLLGA) form the signal peptide. Residues 20 to 27 (ASIPPQPL) constitute a propeptide that is removed on maturation. 7 cysteine pairs are disulfide-bonded: cysteine 38–cysteine 98, cysteine 54–cysteine 145, cysteine 56–cysteine 72, cysteine 71–cysteine 126, cysteine 78–cysteine 119, cysteine 87–cysteine 112, and cysteine 105–cysteine 117. Residues tyrosine 55, glycine 57, and glycine 59 each contribute to the Ca(2+) site. Histidine 75 is a catalytic residue. A Ca(2+)-binding site is contributed by aspartate 76. Aspartate 120 is a catalytic residue.

The protein belongs to the phospholipase A2 family. Group I subfamily. D49 sub-subfamily. Ca(2+) serves as cofactor. Expressed by the venom gland.

It is found in the secreted. It catalyses the reaction a 1,2-diacyl-sn-glycero-3-phosphocholine + H2O = a 1-acyl-sn-glycero-3-phosphocholine + a fatty acid + H(+). In terms of biological role, snake venom phospholipase A2 (PLA2) that inhibits collagen-induced platelet aggregation. PLA2 catalyzes the calcium-dependent hydrolysis of the 2-acyl groups in 3-sn-phosphoglycerides. This chain is Acidic phospholipase A2 S13-69J, found in Austrelaps superbus (Lowland copperhead snake).